The following is a 188-amino-acid chain: Elongation factor P (188 aa).

This sequence belongs to the elongation factor P family.

It is found in the cytoplasm. It functions in the pathway protein biosynthesis; polypeptide chain elongation. Its function is as follows. Involved in peptide bond synthesis. Stimulates efficient translation and peptide-bond synthesis on native or reconstituted 70S ribosomes in vitro. Probably functions indirectly by altering the affinity of the ribosome for aminoacyl-tRNA, thus increasing their reactivity as acceptors for peptidyl transferase. This Rickettsia akari (strain Hartford) protein is Elongation factor P.